The chain runs to 182 residues: NADH-quinone oxidoreductase subunit I (182 aa).

2 consecutive 4Fe-4S ferredoxin-type domains span residues 50–82 and 92–121; these read IILS…LQKA and EFFR…MTPD. [4Fe-4S] cluster-binding residues include C62, C65, C68, C72, C101, C104, C107, and C111.

The protein belongs to the complex I 23 kDa subunit family. NDH-1 is composed of 14 different subunits. Subunits NuoA, H, J, K, L, M, N constitute the membrane sector of the complex. [4Fe-4S] cluster is required as a cofactor.

It localises to the cell inner membrane. It catalyses the reaction a quinone + NADH + 5 H(+)(in) = a quinol + NAD(+) + 4 H(+)(out). Functionally, NDH-1 shuttles electrons from NADH, via FMN and iron-sulfur (Fe-S) centers, to quinones in the respiratory chain. The immediate electron acceptor for the enzyme in this species is believed to be ubiquinone. Couples the redox reaction to proton translocation (for every two electrons transferred, four hydrogen ions are translocated across the cytoplasmic membrane), and thus conserves the redox energy in a proton gradient. The protein is NADH-quinone oxidoreductase subunit I of Psychrobacter cryohalolentis (strain ATCC BAA-1226 / DSM 17306 / VKM B-2378 / K5).